Reading from the N-terminus, the 438-residue chain is Methyl-coenzyme M reductase subunit beta (438 aa).

Tyr367 provides a ligand contact to coenzyme M. Position 369 (Gly369) interacts with coenzyme B.

Belongs to the methyl-coenzyme M reductase beta subunit family. As to quaternary structure, MCR is a hexamer of two alpha, two beta, and two gamma chains, forming a dimer of heterotrimers. Requires coenzyme F430 as cofactor.

The protein localises to the cytoplasm. It catalyses the reaction coenzyme B + methyl-coenzyme M = methane + coenzyme M-coenzyme B heterodisulfide. Its pathway is one-carbon metabolism; methyl-coenzyme M reduction; methane from methyl-coenzyme M: step 1/1. Component of the methyl-coenzyme M reductase (MCR) I that catalyzes the reductive cleavage of methyl-coenzyme M (CoM-S-CH3 or 2-(methylthio)ethanesulfonate) using coenzyme B (CoB or 7-mercaptoheptanoylthreonine phosphate) as reductant which results in the production of methane and the mixed heterodisulfide of CoB and CoM (CoM-S-S-CoB). This is the final step in methanogenesis. The chain is Methyl-coenzyme M reductase subunit beta (mcrB) from Methanothermus fervidus.